A 119-amino-acid polypeptide reads, in one-letter code: Large ribosomal subunit protein uL18 (119 aa).

The disordered stretch occupies residues 1 to 20 (MISKPDKNKTRQKRHTRVRG). The segment covering 10–20 (TRQKRHTRVRG) has biased composition (basic residues).

It belongs to the universal ribosomal protein uL18 family. In terms of assembly, part of the 50S ribosomal subunit; part of the 5S rRNA/L5/L18/L25 subcomplex. Contacts the 5S and 23S rRNAs.

Functionally, this is one of the proteins that bind and probably mediate the attachment of the 5S RNA into the large ribosomal subunit, where it forms part of the central protuberance. This chain is Large ribosomal subunit protein uL18, found in Latilactobacillus sakei subsp. sakei (strain 23K) (Lactobacillus sakei subsp. sakei).